Consider the following 191-residue polypeptide: Large ribosomal subunit protein uL3 (191 aa).

The interval 119–138 is disordered; it reads AAHGSRFHRRPGSIGNREWP.

Belongs to the universal ribosomal protein uL3 family. Part of the 50S ribosomal subunit. Forms a cluster with proteins L14 and L19.

One of the primary rRNA binding proteins, it binds directly near the 3'-end of the 23S rRNA, where it nucleates assembly of the 50S subunit. The sequence is that of Large ribosomal subunit protein uL3 (rplC) from Helicobacter pylori (strain ATCC 700392 / 26695) (Campylobacter pylori).